Consider the following 343-residue polypeptide: MSHQTGIKANAELLKFFGKCKDGKTRVLKVSIENEELALVDHKAVKKDWEKDYDALVKPLVEDDVPCYILYRLDYKIPTGYAWLLLSWVPEAATVRQKMLYASTKATLKLEFGSSNIKEEINATTKEETTLKGYQKHKIDFSAPAPLTSREEELAEIRKSEVKTDFGIDTKQQTLGGINCPISDPTSQALIDMRRGAYNYLQFRIDLEEEKIHVVNAANIDILKLPSQIPKDHARYHLYLFKHQHEGNHLDSVVFVYSMPGYTCSIRERMMYSSCKGPFSATIEKHGIEITKKIEIDNGEELTEEFIYEELHPRKLNLRPQFSKPKGPPSRGAKRLTKPQAVE.

ADF-H domains lie at 4-139 and 177-312; these read QTGI…KHKI and GINC…EELH. The interval 317-343 is disordered; the sequence is NLRPQFSKPKGPPSRGAKRLTKPQAVE.

This sequence belongs to the actin-binding proteins ADF family. Twinfilin subfamily. Interacts with G-actin; ADP-actin form.

Its subcellular location is the cytoplasm. It is found in the cytoskeleton. The protein resides in the cell cortex. Its function is as follows. Actin-binding protein involved in motile and morphological processes. Inhibits actin polymerization, likely by sequestering G-actin. The polypeptide is Twinfilin (twf) (Aedes aegypti (Yellowfever mosquito)).